A 139-amino-acid chain; its full sequence is Large ribosomal subunit protein bL17 (139 aa).

Positions 117-139 (DRDPEAKGQDSGPVEIKDESEEG) are disordered.

This sequence belongs to the bacterial ribosomal protein bL17 family. In terms of assembly, part of the 50S ribosomal subunit. Contacts protein L32.

This is Large ribosomal subunit protein bL17 from Rhodospirillum centenum (strain ATCC 51521 / SW).